The following is a 255-amino-acid chain: Phosphoribosyl isomerase A (255 aa).

The Proton acceptor role is filled by Asp-21. The active-site Proton donor is the Asp-140.

Belongs to the HisA/HisF family.

The protein resides in the cytoplasm. The catalysed reaction is 1-(5-phospho-beta-D-ribosyl)-5-[(5-phospho-beta-D-ribosylamino)methylideneamino]imidazole-4-carboxamide = 5-[(5-phospho-1-deoxy-D-ribulos-1-ylimino)methylamino]-1-(5-phospho-beta-D-ribosyl)imidazole-4-carboxamide. It carries out the reaction N-(5-phospho-beta-D-ribosyl)anthranilate = 1-(2-carboxyphenylamino)-1-deoxy-D-ribulose 5-phosphate. It participates in amino-acid biosynthesis; L-histidine biosynthesis; L-histidine from 5-phospho-alpha-D-ribose 1-diphosphate: step 4/9. The protein operates within amino-acid biosynthesis; L-tryptophan biosynthesis; L-tryptophan from chorismate: step 3/5. Involved in both the histidine and tryptophan biosynthetic pathways. The polypeptide is Phosphoribosyl isomerase A (Mycolicibacterium vanbaalenii (strain DSM 7251 / JCM 13017 / BCRC 16820 / KCTC 9966 / NRRL B-24157 / PYR-1) (Mycobacterium vanbaalenii)).